We begin with the raw amino-acid sequence, 336 residues long: Gastrula zinc finger protein XlCGF57.1 (336 aa).

C2H2-type zinc fingers lie at residues 6-28 (YTCTECGKGFIKKSRLVTHMKIH), 34-56 (FICTECGKGFSQKGILQTHMKTH), 62-84 (FTCTECGKNFAQITTLLRHLTIH), 90-112 (FSCTECGKHFAHKGHLVSHMKTH), 118-140 (FTCTECGKHFAQKGHLVSHMKTH), 146-168 (FTCTECGKNFAQKTNLLCHLKIH), 174-196 (FTCTECGDKFAKKNNLLRHLKIH), 202-224 (FTCTECGKAFTLKGSLVGHMKIH), 230-252 (FSCTQCGKNFTQKNSLLCHLTMH), 258-280 (FTCTECGKGFALKGNLVLHTKIH), and 286-308 (FSCTQCGKNFAQKNSLLRHLKIH).

Belongs to the krueppel C2H2-type zinc-finger protein family.

The protein localises to the nucleus. In terms of biological role, may be involved in transcriptional regulation. This chain is Gastrula zinc finger protein XlCGF57.1, found in Xenopus laevis (African clawed frog).